The chain runs to 160 residues: ATP synthase subunit b (160 aa).

A helical transmembrane segment spans residues 15 to 35 (LAIVIGVLFWFLRGFLGGILE).

It belongs to the ATPase B chain family. F-type ATPases have 2 components, F(1) - the catalytic core - and F(0) - the membrane proton channel. F(1) has five subunits: alpha(3), beta(3), gamma(1), delta(1), epsilon(1). F(0) has four main subunits: a(1), b(1), b'(1) and c(10-14). The alpha and beta chains form an alternating ring which encloses part of the gamma chain. F(1) is attached to F(0) by a central stalk formed by the gamma and epsilon chains, while a peripheral stalk is formed by the delta, b and b' chains.

It is found in the cellular thylakoid membrane. Functionally, f(1)F(0) ATP synthase produces ATP from ADP in the presence of a proton or sodium gradient. F-type ATPases consist of two structural domains, F(1) containing the extramembraneous catalytic core and F(0) containing the membrane proton channel, linked together by a central stalk and a peripheral stalk. During catalysis, ATP synthesis in the catalytic domain of F(1) is coupled via a rotary mechanism of the central stalk subunits to proton translocation. Component of the F(0) channel, it forms part of the peripheral stalk, linking F(1) to F(0). In Synechococcus sp. (strain CC9902), this protein is ATP synthase subunit b.